The primary structure comprises 204 residues: Phosphopantothenoylcysteine decarboxylase (204 aa).

Residues Phe59 and 104–107 contribute to the FMN site; that span reads DANT. Substrate is bound at residue Asn140. Cys173 serves as the catalytic Proton donor.

It belongs to the HFCD (homooligomeric flavin containing Cys decarboxylase) superfamily. As to quaternary structure, homotrimer. FMN serves as cofactor.

The catalysed reaction is N-[(R)-4-phosphopantothenoyl]-L-cysteine + H(+) = (R)-4'-phosphopantetheine + CO2. The protein operates within cofactor biosynthesis; coenzyme A biosynthesis; CoA from (R)-pantothenate: step 3/5. Functionally, catalyzes the decarboxylation of the cysteine moiety of 4-phosphopantothenoylcysteine to form 4'-phosphopantotheine and this reaction forms part of the biosynthesis of coenzyme A. This is Phosphopantothenoylcysteine decarboxylase (PPCDC) from Homo sapiens (Human).